The following is a 406-amino-acid chain: N-acetylmuramoyl-L-alanine amidase CwlM (406 aa).

Peptidoglycan-binding domain stretches follow at residues 18-83 (SAAV…YRAL) and 105-160 (GDDV…LRSL). One can recognise a MurNAc-LAA domain in the interval 193 to 370 (IIIDPGRGGV…IAEGILAAVK (178 aa)).

This sequence belongs to the N-acetylmuramoyl-L-alanine amidase 3 family.

The protein localises to the periplasm. The catalysed reaction is Hydrolyzes the link between N-acetylmuramoyl residues and L-amino acid residues in certain cell-wall glycopeptides.. Its pathway is cell wall degradation; peptidoglycan degradation. Cell-wall hydrolase that hydrolyzes the amide bond between N-acetylmuramic acid and L-alanine in cell-wall glycopeptides. Is able to lyse whole mycobacteria, release peptidoglycan from the cell wall of M.luteus and M.smegmatis, and cleave N-acetylmuramoyl-L-alanyl-D-isoglutamine, releasing free N-acetylmuramic acid and dipeptide. This chain is N-acetylmuramoyl-L-alanine amidase CwlM, found in Mycobacterium tuberculosis (strain ATCC 25618 / H37Rv).